Here is a 551-residue protein sequence, read N- to C-terminus: Protein PLASTID TRANSCRIPTIONALLY ACTIVE 12, chloroplastic (551 aa).

A chloroplast-targeting transit peptide spans 1-47; the sequence is MASCSRTWLLPGMAPQATAQTVPRPLQSLKVFAGLPHRRRVLFSGVS. 2 disordered regions span residues 76–161 and 463–529; these read SSYF…EGES and HSYN…DQLS. Low complexity predominate over residues 109 to 119; it reads RVRAARAPAPV. Acidic residues-rich tracts occupy residues 467–476 and 485–498; these read EDSDDDEEDA and SLED…DAED. Polar residues predominate over residues 505-516; sequence RNWSVLKTTGQA. Residues 518–529 show a composition bias toward basic and acidic residues; the sequence is NPKEKSKKDQLS.

As to quaternary structure, component of the plastid-encoded plastid RNA polymerase (PEP) complex.

It localises to the plastid. Its subcellular location is the chloroplast. Its function is as follows. Required for the activity of the plastid-encoded RNA polymerase (PEP) and full expression of genes transcribed by PEP. Required for the proper build-up and formation of the PEP-complex. Binds single-stranded (ss) DNA and RNA, but not double-stranded (ds) DNA. This Oryza sativa subsp. japonica (Rice) protein is Protein PLASTID TRANSCRIPTIONALLY ACTIVE 12, chloroplastic.